We begin with the raw amino-acid sequence, 556 residues long: Genetic interactor of prohibitins 3, mitochondrial (556 aa).

A mitochondrion-targeting transit peptide spans 1–21; sequence MLNLCHALRGVRQFSCSVIVK. The CP-type G domain maps to 113 to 305; sequence ESTLNDILNY…LFDLPGYSTS (193 aa).

Belongs to the TRAFAC class YlqF/YawG GTPase family. GEP3 subfamily.

It localises to the mitochondrion. In terms of biological role, interacts genetically with prohibitins and thus may be involved in the mitochondrial lipid metabolism. This Saccharomyces cerevisiae (strain AWRI1631) (Baker's yeast) protein is Genetic interactor of prohibitins 3, mitochondrial (GEP3).